A 324-amino-acid polypeptide reads, in one-letter code: tRNA dimethylallyltransferase (324 aa).

Position 17-24 (17-24) interacts with ATP; the sequence is GPTASGKT. 19-24 is a substrate binding site; it reads TASGKT. 4 interaction with substrate tRNA regions span residues 42–45, 166–170, 251–256, and 284–291; these read DSAL, QRIQR, RCVGYR, and KRQITWLR.

Belongs to the IPP transferase family. Monomer. Requires Mg(2+) as cofactor.

It carries out the reaction adenosine(37) in tRNA + dimethylallyl diphosphate = N(6)-dimethylallyladenosine(37) in tRNA + diphosphate. In terms of biological role, catalyzes the transfer of a dimethylallyl group onto the adenine at position 37 in tRNAs that read codons beginning with uridine, leading to the formation of N6-(dimethylallyl)adenosine (i(6)A). The polypeptide is tRNA dimethylallyltransferase (Burkholderia ambifaria (strain MC40-6)).